The chain runs to 425 residues: Proteinase-activated receptor 1 (425 aa).

Residues 1-21 form the signal peptide; the sequence is MGPRRLLLVAACLCLCGPLLS. Positions 22–41 are cleaved as a propeptide — removed for receptor activation; it reads ARTRARRPASKATNATLDPR. Asparagine 35, asparagine 62, and asparagine 75 each carry an N-linked (GlcNAc...) asparagine glycan. At 42–102 the chain is on the extracellular side; sequence SFLLRNPNDK…SGYLTSSWLT (61 aa). Residues 103–128 form a helical membrane-spanning segment; sequence LFVPSVYTGVFVVSLPVNIMAIVVFI. Residues 129-137 are Cytoplasmic-facing; it reads LKMKVKKPA. Residues 138-157 form a helical membrane-spanning segment; it reads VVYMLHLATADVLFVSVLPF. Over 158 to 176 the chain is Extracellular; it reads KISYYLSGSDWQFGSELCR. Cysteine 175 and cysteine 254 are disulfide-bonded. A helical transmembrane segment spans residues 177–198; the sequence is FVTAAFYCNMYASILLMTVISI. At 199–218 the chain is on the cytoplasmic side; sequence DRFLAVVYPMQSLSWRTLGR. The helical transmembrane segment at 219 to 239 threads the bilayer; sequence ASFTCLAIWALAIAGVVPLLL. At 240–268 the chain is on the extracellular side; it reads KEQTIQVPGLNITTCHDVLNETLLEGYYA. Residues asparagine 250 and asparagine 259 are each glycosylated (N-linked (GlcNAc...) asparagine). The helical transmembrane segment at 269 to 288 threads the bilayer; sequence YYFSAFSAVFFFVPLIISTV. Over 289–311 the chain is Cytoplasmic; the sequence is CYVSIIRCLSSSTVANRSKKSRA. A helical membrane pass occupies residues 312-334; the sequence is LFLSAAVFCIFIICFGPTNILLI. Topologically, residues 335–350 are extracellular; that stretch reads AHYSFLSHTSTTEAAY. A helical membrane pass occupies residues 351–374; it reads FAYLLCVCVSSISCCIDPLIYYYA. Topologically, residues 375–425 are cytoplasmic; sequence SSECQRYVYSILCCKESSDPSSSNSSGQLMASKMDTCSSNLNNSIYKKLLT. At serine 418 the chain carries Phosphoserine.

The protein belongs to the G-protein coupled receptor 1 family. Post-translationally, proteolytic cleavage by thrombin generates a new N-terminus that functions as a tethered ligand. Also proteolytically cleaved by cathepsin CTSG. Cleavage at 41-Arg-|-Ser-42 by CTSG results in receptor activation while cleavage at 55-Phe-|-Trp-56 results in inhibition of receptor activation. Phosphorylated in the C-terminal tail; probably mediating desensitization prior to the uncoupling and internalization of the receptor.

The protein resides in the cell membrane. Functionally, high affinity receptor that binds the activated thrombin, leading to calcium release from intracellular stores. The thrombin-activated receptor signaling pathway is mediated through PTX-insensitive G proteins, activation of phospholipase C resulting in the production of 1D-myo-inositol 1,4,5-trisphosphate (InsP3) which binds to InsP3 receptors causing calcium release from the stores. In astrocytes, the calcium released into the cytosol allows the Ca(2+)-dependent release of L-glutamate into the synaptic cleft through BEST1, that targets the neuronal postsynaptic GRIN2A/NMDAR receptor resulting in the synaptic plasticity regulation. May play a role in platelets activation and in vascular development. Mediates up-regulation of pro-inflammatory cytokines, such as MCP-1/CCL2 and IL6, triggered by coagulation factor Xa (F10) in cardiac fibroblasts and umbilical vein endothelial cells. The chain is Proteinase-activated receptor 1 from Papio hamadryas (Hamadryas baboon).